The following is a 239-amino-acid chain: Tetraspanin-9 (239 aa).

Residues M1–M13 lie on the Cytoplasmic side of the membrane. Residues F14–L34 traverse the membrane as a helical segment. At S35 to N55 the chain is on the extracellular side. A helical membrane pass occupies residues L56–I76. The Cytoplasmic portion of the chain corresponds to K77 to S85. A helical membrane pass occupies residues F86–V106. At Y107–H203 the chain is on the extracellular side. N180 carries an N-linked (GlcNAc...) asparagine glycan. Residues V204–M224 traverse the membrane as a helical segment. Residues T225 to A239 lie on the Cytoplasmic side of the membrane.

The protein belongs to the tetraspanin (TM4SF) family.

It localises to the membrane. The sequence is that of Tetraspanin-9 (tspan9) from Xenopus tropicalis (Western clawed frog).